A 143-amino-acid chain; its full sequence is Transcriptional regulator MraZ (143 aa).

SpoVT-AbrB domains are found at residues 5 to 47 (EYNH…SMDE) and 76 to 119 (ATEC…SSDQ).

It belongs to the MraZ family. As to quaternary structure, forms oligomers.

The protein resides in the cytoplasm. The protein localises to the nucleoid. The protein is Transcriptional regulator MraZ of Alkaliphilus metalliredigens (strain QYMF).